The following is a 450-amino-acid chain: Phosphoglucosamine mutase (450 aa).

Ser107 (phosphoserine intermediate) is an active-site residue. Positions 107, 246, 248, and 250 each coordinate Mg(2+). Phosphoserine is present on Ser107.

It belongs to the phosphohexose mutase family. Requires Mg(2+) as cofactor. Post-translationally, activated by phosphorylation.

The catalysed reaction is alpha-D-glucosamine 1-phosphate = D-glucosamine 6-phosphate. Its function is as follows. Catalyzes the conversion of glucosamine-6-phosphate to glucosamine-1-phosphate. The protein is Phosphoglucosamine mutase of Dechloromonas aromatica (strain RCB).